A 248-amino-acid chain; its full sequence is MADVAGTSNRDFRGREQRLFNSEQYNYNNSLNGEVSVWVYAYYSDGSVLVINKNSQYKVGISETFKALKEYREGQHNDSYDEYEVNQSIYYPNGGDARKFHSNAKPRAIQIIFSPSVNVRTIKMAKGNAVSVPDEYLQRSHPWEATGIKYRKIKRDGEIVGYSHYFELPHEYNSISLAVSGVHKNPSSYNVGSAHNVMDVFQSCDLALRFCNRYWAELELVNHYISPNAYPYLDINNHSYGVALSNRQ.

The first 27 residues, 1–27 (MADVAGTSNRDFRGREQRLFNSEQYNY), serve as a signal peptide directing secretion. N-linked (GlcNAc...) asparagine; by host glycosylation is found at Asn28, Asn77, Asn86, and Asn237.

It is found in the host cytoplasm. In terms of biological role, major component of the virus occlusion bodies, which are large proteinaceous structures (polyhedra), that protect the virus from the outside environment for extended periods until they are ingested by insect larvae. The sequence is that of Polyhedrin from Bombyx mori cytoplasmic polyhedrosis virus (BmCPV).